Consider the following 198-residue polypeptide: Host transcription reprogramming factor 1 (198 aa).

An N-terminal signal peptide occupies residues 1–19; the sequence is MQLSNFLSIWALVAMGATA. Disordered regions lie at residues 21 to 59 and 71 to 198; these read PMPSGSAPGNPFADGEAYGARPSQGLTPVPKVHDGSYHS and ERLA…PVQL. The segment at 58-81 adopts a C2H2-type zinc-finger fold; the sequence is HSCETCAAPFRTEERLAAHRQADH. Composition is skewed to basic and acidic residues over residues 71–80, 104–128, and 167–177; these read ERLAAHRQAD, TSERERLDRLASRVGEDYVEKRSQE, and KLDKPTRKEQY.

The protein localises to the secreted. It is found in the host nucleus. In terms of biological role, secreted effector that translocates into the nuclei of host cells to reprogram the expression of immunity-associated genes by binding to effector binding elements (EBEs) in rice. Binds the 5'-CAATCTTC-3' EBE of promoters from targeted rice genes and probably recruits a yet to be determined host repressor. Causes ambivalent immunity with increased susceptibility to the hemibiotrophic pathogens Magnaporthe oryzae and Xanthomonas oryzae pv. oryzae, but enhances resistance to Cochliobolus miyabeanus, a necrotrophic pathogen. The chain is Host transcription reprogramming factor 1 from Pyricularia oryzae (strain 70-15 / ATCC MYA-4617 / FGSC 8958) (Rice blast fungus).